An 881-amino-acid chain; its full sequence is Receptor-like protein 41 (881 aa).

A signal peptide spans 1–21; sequence MSELLLRLNFLLLLLLSCVSP. Over 22-844 the chain is Extracellular; the sequence is SSFVTFNNPV…EEQEQVLNWE (823 aa). N-linked (GlcNAc...) asparagine glycans are attached at residues asparagine 58, asparagine 70, asparagine 91, asparagine 109, and asparagine 145. LRR repeat units lie at residues 97–121, 122–145, 146–169, 170–195, 197–219, 220–244, 245–267, 268–291, 293–317, 319–340, 342–364, 365–390, 391–412, 413–437, 439–462, and 463–486; these read FHEL…KFGM, LNKL…SFSN, LSML…VRNL, RKLR…LFEL, HLTY…EFGN, LNKL…ISNL, TQLT…VQNL, TKLS…LFTM, FLSY…SSSS, LESL…ISKL, NLKE…LFSS, FKSL…SYIS, LTLE…ILKS, LPNL…LWSL, RLSS…ILVN, and SSVQ…PLSI. Asparagine 189 carries an N-linked (GlcNAc...) asparagine glycan. Asparagine 243 and asparagine 266 each carry an N-linked (GlcNAc...) asparagine glycan. N-linked (GlcNAc...) asparagine glycosylation is found at asparagine 305 and asparagine 312. An N-linked (GlcNAc...) asparagine glycan is attached at asparagine 402. A glycan (N-linked (GlcNAc...) asparagine) is linked at asparagine 462. One copy of the LRR 17; degenerate repeat lies at 487–506; sequence IYFSARYNRFKGDIPLSICN. Residues asparagine 506 and asparagine 519 are each glycosylated (N-linked (GlcNAc...) asparagine). 10 LRR repeats span residues 507–528, 529–552, 554–576, 578–599, 600–624, 627–651, 701–724, 725–748, 749–772, and 774–797; these read RSSL…PPCL, SNLL…YFAD, PLRS…LLNC, ALQF…YLKV, LPKL…NQGS, FPEL…FFVN, TSSA…IGLL, KALI…LANL, VKIE…LGTL, and FLAY…QITG. Asparagine 575 is a glycosylation site (N-linked (GlcNAc...) asparagine). N-linked (GlcNAc...) asparagine glycosylation is present at asparagine 731. N-linked (GlcNAc...) asparagine glycosylation occurs at asparagine 779. Residues 845-865 traverse the membrane as a helical segment; it reads GVAIGYGVGVLLGLAIAQLIA. The Cytoplasmic portion of the chain corresponds to 866–881; the sequence is SYKPEWLACLIKSRNR.

The protein belongs to the RLP family.

It is found in the cell membrane. May be involved in ABA-induced senescence responses. In Arabidopsis thaliana (Mouse-ear cress), this protein is Receptor-like protein 41.